The chain runs to 186 residues: MNPIALLLLAFAMSTDAFAAAIGKGAILKKPRLTEAFRIGIIFGSIEAITPLVGWLIGKSAASYVEAWDHWIAFSLLTVLGLHMIYEGTRPDGGSEEHKAQKMSLLRTCLTAFSTSIDAMAVGVSLAFINVNIWIASALIGLATTLMVTIGIMLGRAIGSVMGHRAEIFGGLTLIAVGAWILYGQL.

6 helical membrane-spanning segments follow: residues 3-23 (PIALLLLAFAMSTDAFAAAIG), 39-59 (IGIIFGSIEAITPLVGWLIGK), 65-85 (VEAWDHWIAFSLLTVLGLHMI), 109-129 (CLTAFSTSIDAMAVGVSLAFI), 133-153 (IWIASALIGLATTLMVTIGIM), and 166-186 (AEIFGGLTLIAVGAWILYGQL).

The protein belongs to the MntP (TC 9.B.29) family.

The protein localises to the cell inner membrane. Functionally, probably functions as a manganese efflux pump. This Alcanivorax borkumensis (strain ATCC 700651 / DSM 11573 / NCIMB 13689 / SK2) protein is Putative manganese efflux pump MntP.